Consider the following 449-residue polypeptide: Chromosomal replication initiator protein DnaA (449 aa).

A domain I, interacts with DnaA modulators region spans residues 1-72 (MENIHDLWER…SETIDDLTGV (72 aa)). A domain II region spans residues 72-111 (VRLYPKFVIPTSQLDEPFVEQELKKPMKQPPAQNGEMPNN). Positions 112–328 (MLNDKYTFDT…GALIRVVAYS (217 aa)) are domain III, AAA+ region. 4 residues coordinate ATP: G156, G158, K159, and T160. The domain IV, binds dsDNA stretch occupies residues 329–449 (SLINQDMNAD…IQDISDKLRS (121 aa)).

It belongs to the DnaA family. Oligomerizes as a right-handed, spiral filament on DNA at oriC.

The protein localises to the cytoplasm. Plays an essential role in the initiation and regulation of chromosomal replication. ATP-DnaA binds to the origin of replication (oriC) to initiate formation of the DNA replication initiation complex once per cell cycle. Binds the DnaA box (a 9 base pair repeat at the origin) and separates the double-stranded (ds)DNA. Forms a right-handed helical filament on oriC DNA; dsDNA binds to the exterior of the filament while single-stranded (ss)DNA is stabiized in the filament's interior. The ATP-DnaA-oriC complex binds and stabilizes one strand of the AT-rich DNA unwinding element (DUE), permitting loading of DNA polymerase. After initiation quickly degrades to an ADP-DnaA complex that is not apt for DNA replication. Binds acidic phospholipids. This is Chromosomal replication initiator protein DnaA from Halalkalibacterium halodurans (strain ATCC BAA-125 / DSM 18197 / FERM 7344 / JCM 9153 / C-125) (Bacillus halodurans).